Here is a 271-residue protein sequence, read N- to C-terminus: MVSYGSHSSEVSKVLKTPKFVLRYGNVSSKQRFALKRKINYKLRESKYQEYLNEYNTFVLYDWENSGAGSLVDSSYNLPSLWKEFITEGISKGAINDKLPTVFMKRKLTNSALGHCLGLDFLTDPSESEHEYRCMFQTVQDIPSLSQLILFNSMPNVPVRLKLHTIGININFGCKRSLISNGGDQDTEMSEAVSYIQPLLEESSRMYRNLNYWKLLKIARNNKKDEPLDQSTRIKSQVKLLLSQLATNRITSPSVTDHGGHNWLIFTRRRL.

The protein resides in the mitochondrion. Its function is as follows. Involved in 5'-end processing of mitochondrial COB, 15S rRNA, and RPM1 transcript. May also have a role in 3'-end processing of the COB pre-mRNA. The protein is Cytochrome b termination protein 1 (CBT1) of Saccharomyces cerevisiae (strain ATCC 204508 / S288c) (Baker's yeast).